The sequence spans 283 residues: tRNA-cytidine(32) 2-sulfurtransferase (283 aa).

The short motif at 37–42 (SGGKDS) is the PP-loop motif element. Residues Cys112, Cys115, and Cys203 each coordinate [4Fe-4S] cluster.

It belongs to the TtcA family. In terms of assembly, homodimer. Mg(2+) serves as cofactor. The cofactor is [4Fe-4S] cluster.

The protein localises to the cytoplasm. It carries out the reaction cytidine(32) in tRNA + S-sulfanyl-L-cysteinyl-[cysteine desulfurase] + AH2 + ATP = 2-thiocytidine(32) in tRNA + L-cysteinyl-[cysteine desulfurase] + A + AMP + diphosphate + H(+). It functions in the pathway tRNA modification. Catalyzes the ATP-dependent 2-thiolation of cytidine in position 32 of tRNA, to form 2-thiocytidine (s(2)C32). The sulfur atoms are provided by the cysteine/cysteine desulfurase (IscS) system. This is tRNA-cytidine(32) 2-sulfurtransferase from Legionella pneumophila subsp. pneumophila (strain Philadelphia 1 / ATCC 33152 / DSM 7513).